A 756-amino-acid chain; its full sequence is Serine/threonine-protein kinase CBK1 (756 aa).

2 disordered regions span residues 1-180 (MYNS…SYSS) and 242-261 (QQQQ…NNGT). Positions 23–34 (QQQDQQHQQQQQ) are enriched in low complexity. Positions 53–77 (FSSNYMKEQGSHQSLQEHLQRETGN) are enriched in polar residues. Threonine 109 is subject to Phosphothreonine. Positions 120–180 (HNNNSQSMVQ…TLRSNGSYSS (61 aa)) are enriched in polar residues. Low complexity predominate over residues 242–255 (QQQQQQQSQSPVQS). Residues 352 to 672 (FHTVKVIGKG…ADEIKSHPFF (321 aa)) form the Protein kinase domain. Residues 358–366 (IGKGAFGEV) and lysine 381 each bind ATP. Aspartate 475 functions as the Proton acceptor in the catalytic mechanism. The region spanning 673-754 (RGVDWNTIRQ…SRFDYLTRKN (82 aa)) is the AGC-kinase C-terminal domain. The tract at residues 707 to 732 (NVPDSPAMAQAAKQREQMTKQGGSAP) is disordered.

The protein belongs to the protein kinase superfamily. STE Ser/Thr protein kinase family. COT1 subfamily. As to quaternary structure, associates with PAG1/TAO3 and interacts with MOB2.

The catalysed reaction is L-seryl-[protein] + ATP = O-phospho-L-seryl-[protein] + ADP + H(+). It carries out the reaction L-threonyl-[protein] + ATP = O-phospho-L-threonyl-[protein] + ADP + H(+). In terms of biological role, protein kinase that seems to play a role in the regulation of cell morphogenesis and proliferation. In Saccharomyces cerevisiae (strain ATCC 204508 / S288c) (Baker's yeast), this protein is Serine/threonine-protein kinase CBK1 (CBK1).